Consider the following 119-residue polypeptide: Large ribosomal subunit protein bL20 (119 aa).

The protein belongs to the bacterial ribosomal protein bL20 family.

In terms of biological role, binds directly to 23S ribosomal RNA and is necessary for the in vitro assembly process of the 50S ribosomal subunit. It is not involved in the protein synthesizing functions of that subunit. The protein is Large ribosomal subunit protein bL20 of Stenotrophomonas maltophilia (strain K279a).